Consider the following 152-residue polypeptide: Transcriptional regulator MraZ (152 aa).

SpoVT-AbrB domains lie at 5–52 (ATLV…PLPA) and 81–124 (ASEC…DEQT).

It belongs to the MraZ family. In terms of assembly, forms oligomers.

It localises to the cytoplasm. The protein resides in the nucleoid. Negatively regulates its own expression and that of the subsequent genes in the proximal part of the division and cell wall (dcw) gene cluster. Acts by binding directly to DNA. May also regulate the expression of genes outside the dcw cluster. The sequence is that of Transcriptional regulator MraZ from Sodalis glossinidius (strain morsitans).